Consider the following 1310-residue polypeptide: Zinc finger protein 521 (1310 aa).

Residues 1–10 (MSRRKQAKPR) are compositionally biased toward basic residues. A disordered region spans residues 1–46 (MSRRKQAKPRSLKDPNCKLEDTSEDGESPDCKKRQEEGDELEEEEA). Positions 11–21 (SLKDPNCKLED) are enriched in basic and acidic residues. Residues 48–68 (HSCDSCLQVFESLSDITEHKI) form a C2H2-type 1; degenerate zinc finger. Positions 82-106 (DPTCSWPASSPSSKDQASPIHGEGF) are disordered. Positions 87-97 (WPASSPSSKDQ) are enriched in polar residues. C2H2-type zinc fingers lie at residues 119–141 (YPCQFCDKSFSRLSYLKHHEQSH), 147–169 (FKCTYCSRLFKHKRSRDRHIKLH), 175–197 (YHCSECDASFSRSDHLKIHLKTH), 203–225 (YKCAICRRGFLSSSSLHGHMQVH), 247–270 (QKCSQCEEGFDFPEDLQKHIAECH), 282–305 (LQCMYCHELFMEETSLLNHMEQIH), and 311–333 (NSCNICSENFHSVEELYSHMDSH). The C2H2-type 9; degenerate zinc finger occupies 404–428 (YSCIYCSKQLFSSLAVLQIHLKTMH). 3 C2H2-type zinc fingers span residues 436–459 (HICQYCLEVLPSLFNLNEHLKQVH), 476–499 (YQCNFCSEIFNDLNMLQDHIRSSH), and 512–535 (FFCPHCYMGFLTDTSLEEHIRQVH). The C2H2-type 13; atypical zinc finger occupies 559–584 (YSCSYCTNSPIFNSVLKLNKHIKENH). C2H2-type zinc fingers lie at residues 633–655 (YICNQCGAKYTSLDGFQTHLKTH), 663–685 (LTCPQCNKEFPNQESLLKHVTIH), 693–716 (YICESCDKQFTSVDDLQKHLLDMH), 721–744 (FRCTLCQEVFDSKVSIQLHLAVKH), 751–774 (YRCTSCNWDFRTETDLQLHVKHNH), 782–804 (HKCIFCGESFGTEVELQCHITTH), and 808–831 (YNCKFCSKAFHAIILLEKHLREKH). A C2H2-type 21; degenerate zinc finger spans residues 885–907 (YGCDICGAAYTMESLLQNHQLRD). C2H2-type zinc fingers lie at residues 929–951 (YKCNVCSRTFFSEGGLREHMQTH), 958–980 (YMCPICGERFPSLLTLTEHKVTH), and 1019–1041 (FRCVVCMQTVTSTLELKIHGTFH). The C2H2-type 25; degenerate zinc-finger motif lies at 1064-1082 (YKCASCLKEFRSKQDLVKL). 5 consecutive C2H2-type zinc fingers follow at residues 1138 to 1161 (TRCSSCNVKFESETELQNHIQTIH), 1194 to 1216 (YQCIKCQMVFYNEWDIQVHVANH), 1224 to 1246 (HECKLCSQTFDSPAKLQCHLIEH), 1255 to 1278 (FKCPVCFTVFVQANKLQQHIFSAH), and 1285 to 1308 (YDCAQCPQKFFFQTELQNHTMSQH).

This sequence belongs to the krueppel C2H2-type zinc-finger protein family.

It is found in the nucleus. Functionally, transcription factor that can both act as an activator or a repressor depending on the context. Involved in BMP signaling and in the regulation of the immature compartment of the hematopoietic system. This chain is Zinc finger protein 521 (znf521), found in Xenopus laevis (African clawed frog).